The primary structure comprises 521 residues: Acidic amino acid decarboxylase GADL1 (521 aa).

K333 bears the N6-(pyridoxal phosphate)lysine mark.

Belongs to the group II decarboxylase family. In terms of assembly, homodimer. It depends on pyridoxal 5'-phosphate as a cofactor. As to expression, expressed very weakly in neurons and not detected in astrocytes, brain or liver.

It catalyses the reaction L-aspartate + H(+) = beta-alanine + CO2. The catalysed reaction is 3-sulfino-L-alanine + H(+) = hypotaurine + CO2. It carries out the reaction L-cysteate + H(+) = taurine + CO2. Functionally, may catalyze the decarboxylation of L-aspartate, 3-sulfino-L-alanine (cysteine sulfinic acid), and L-cysteate to beta-alanine, hypotaurine and taurine, respectively. Does not exhibit any decarboxylation activity toward glutamate. The protein is Acidic amino acid decarboxylase GADL1 (GADL1) of Homo sapiens (Human).